The sequence spans 97 residues: UPF0235 protein HD_0778 (97 aa).

Belongs to the UPF0235 family.

The protein is UPF0235 protein HD_0778 of Haemophilus ducreyi (strain 35000HP / ATCC 700724).